The sequence spans 211 residues: Metalloproteinase inhibitor 3 (211 aa).

A signal peptide spans 1–23; that stretch reads MTPWLGLVVLLSCWSLGHWGTEA. Cysteine 24 provides a ligand contact to Zn(2+). Involved in metalloproteinase-binding regions lie at residues 24 to 27 and 88 to 89; these read CTCS and ES. 6 disulfide bridges follow: cysteine 24/cysteine 91, cysteine 26/cysteine 118, cysteine 36/cysteine 143, cysteine 145/cysteine 192, cysteine 150/cysteine 155, and cysteine 163/cysteine 184. Residues 24–143 enclose the NTR domain; that stretch reads CTCSPSHPQD…GLNYRYHLGC (120 aa). A mediates interaction with EFEMP1 region spans residues 105-188; it reads TGRVYEGKMY…SKHYACIRQK (84 aa).

This sequence belongs to the protease inhibitor I35 (TIMP) family. As to quaternary structure, interacts with EFEMP1. Interacts with KDR.

It is found in the secreted. Its subcellular location is the extracellular space. It localises to the extracellular matrix. Mediates a variety of processes including matrix regulation and turnover, inflammation, and angiogenesis, through reversible inhibition of zinc protease superfamily enzymes, primarily matrix metalloproteinases (MMPs). Regulates extracellular matrix (ECM) remodeling through inhibition of matrix metalloproteinases (MMP) including MMP-1, MMP-2, MMP-3, MMP-7, MMP-9, MMP-13, MMP-14 and MMP-15. Additionally, modulates the processing of amyloid precursor protein (APP) and apolipoprotein E receptor ApoER2 by inhibiting two alpha-secretases ADAM10 and ADAM17. Functions as a tumor suppressor and a potent inhibitor of angiogenesis. Exerts its anti-angiogenic effect by directly interacting with vascular endothelial growth factor (VEGF) receptor-2/KDR, preventing its binding to the VEGFA ligand. Selectively induces apoptosis in angiogenic endothelial cells through a caspase-independent cell death pathway. Mechanistically, inhibits matrix-induced focal adhesion kinase PTK2 tyrosine phosphorylation and association with paxillin/PXN and disrupts the incorporation of ITGB3, PTK2 and PXN into focal adhesion contacts on the matrix. The sequence is that of Metalloproteinase inhibitor 3 (Timp3) from Rattus norvegicus (Rat).